A 396-amino-acid chain; its full sequence is S-adenosylmethionine synthase 3 (396 aa).

Glu-13 lines the Mg(2+) pocket. An ATP-binding site is contributed by His-19. A K(+)-binding site is contributed by Glu-47. L-methionine contacts are provided by Glu-60 and Gln-103. ATP is bound by residues 171 to 173 (DGK), 239 to 242 (SGRF), Asp-250, 256 to 257 (RK), Ala-273, Lys-277, and Lys-281. Asp-250 contacts L-methionine. Position 281 (Lys-281) interacts with L-methionine.

This sequence belongs to the AdoMet synthase family. Homotetramer. Mn(2+) serves as cofactor. It depends on Mg(2+) as a cofactor. Requires Co(2+) as cofactor. The cofactor is K(+). As to expression, expressed in roots, stems and leaves (at protein level).

The protein localises to the cytoplasm. The enzyme catalyses L-methionine + ATP + H2O = S-adenosyl-L-methionine + phosphate + diphosphate. It functions in the pathway amino-acid biosynthesis; S-adenosyl-L-methionine biosynthesis; S-adenosyl-L-methionine from L-methionine: step 1/1. Its function is as follows. Catalyzes the formation of S-adenosylmethionine from methionine and ATP. The reaction comprises two steps that are both catalyzed by the same enzyme: formation of S-adenosylmethionine (AdoMet) and triphosphate, and subsequent hydrolysis of the triphosphate. May be involved in the synthesis of betain in response to abiotic stress such as high salinity. This is S-adenosylmethionine synthase 3 (SAMS3) from Atriplex nummularia (Old man saltbush).